Reading from the N-terminus, the 232-residue chain is LexA repressor (232 aa).

The segment at 1–25 (MSDDSSDSTSGAGSGRGRDSGLTER) is disordered. The segment covering 16 to 25 (RGRDSGLTER) has biased composition (basic and acidic residues). The segment at residues 46-66 (IREIGDAVGLTSTSSVAHQLR) is a DNA-binding region (H-T-H motif). Residues Ser156 and Lys193 each act as for autocatalytic cleavage activity in the active site.

Belongs to the peptidase S24 family. Homodimer.

It carries out the reaction Hydrolysis of Ala-|-Gly bond in repressor LexA.. Represses a number of genes involved in the response to DNA damage (SOS response), including recA and lexA. In the presence of single-stranded DNA, RecA interacts with LexA causing an autocatalytic cleavage which disrupts the DNA-binding part of LexA, leading to derepression of the SOS regulon and eventually DNA repair. The polypeptide is LexA repressor (Mycolicibacterium vanbaalenii (strain DSM 7251 / JCM 13017 / BCRC 16820 / KCTC 9966 / NRRL B-24157 / PYR-1) (Mycobacterium vanbaalenii)).